Here is a 100-residue protein sequence, read N- to C-terminus: MITKEEAQKIAKLARLKFEEDTIEKFFTQLSTIMDMIDILNEIDCKDIEPLTSVCNMNARMREDAVTSSDLSSELFDNVSGNSAQLAKEVKYFITPKVVE.

Belongs to the GatC family. In terms of assembly, heterotrimer of A, B and C subunits.

It catalyses the reaction L-glutamyl-tRNA(Gln) + L-glutamine + ATP + H2O = L-glutaminyl-tRNA(Gln) + L-glutamate + ADP + phosphate + H(+). The enzyme catalyses L-aspartyl-tRNA(Asn) + L-glutamine + ATP + H2O = L-asparaginyl-tRNA(Asn) + L-glutamate + ADP + phosphate + 2 H(+). Allows the formation of correctly charged Asn-tRNA(Asn) or Gln-tRNA(Gln) through the transamidation of misacylated Asp-tRNA(Asn) or Glu-tRNA(Gln) in organisms which lack either or both of asparaginyl-tRNA or glutaminyl-tRNA synthetases. The reaction takes place in the presence of glutamine and ATP through an activated phospho-Asp-tRNA(Asn) or phospho-Glu-tRNA(Gln). This chain is Aspartyl/glutamyl-tRNA(Asn/Gln) amidotransferase subunit C, found in Rickettsia peacockii (strain Rustic).